A 905-amino-acid polypeptide reads, in one-letter code: FIGNL1-interacting regulator of recombination and mitosis (905 aa).

2 positions are modified to phosphoserine: serine 101 and serine 796. At lysine 845 the chain carries N6-acetyllysine.

Interacts (via its N-terminal region) with PLK1; controls PLK1 kinase activity. Interacts (via the KVVXF motif) with PPP1CC; controls PLK1 kinase activity. Interacts with FIGNL1; may regulate homologous recombination. In terms of processing, phosphorylation at Ser-101 by PLK1 strengthens FIRRM-PLK1 interaction. Phosphorylation at Ser-796 by PLK1 negatively regulates its interaction with PPP1CC.

It is found in the chromosome. The protein resides in the centromere. The protein localises to the kinetochore. It localises to the nucleus. Its subcellular location is the midbody. It is found in the cytoplasm. The protein resides in the cytoskeleton. The protein localises to the spindle. Its function is as follows. Regulates PLK1 kinase activity at kinetochores and promotes faithful chromosome segregation in prometaphase by bridging kinase and phosphatase activities. Phosphorylation of FIRRM by PLK1 negatively regulates its interaction with the phosphatase, PPP1CC, thus creating a negative feedback loop for maintaining proper PLK1 kinase activity during mitosis. In complex with FIGL1 may regulate homologous recombination. The polypeptide is FIGNL1-interacting regulator of recombination and mitosis (Rattus norvegicus (Rat)).